A 43-amino-acid chain; its full sequence is Protein PsbN (43 aa).

Residues 7 to 27 (VAIFISCLLVSFTGYALYTAF) form a helical membrane-spanning segment.

This sequence belongs to the PsbN family.

The protein resides in the plastid. It is found in the chloroplast thylakoid membrane. In terms of biological role, may play a role in photosystem I and II biogenesis. The polypeptide is Protein PsbN (Zygnema circumcarinatum (Green alga)).